A 126-amino-acid chain; its full sequence is Small ribosomal subunit protein bS6 (126 aa).

Residues leucine 103 to glutamate 126 are disordered. Acidic residues predominate over residues leucine 115 to glutamate 126.

It belongs to the bacterial ribosomal protein bS6 family.

In terms of biological role, binds together with bS18 to 16S ribosomal RNA. The protein is Small ribosomal subunit protein bS6 of Glaesserella parasuis serovar 5 (strain SH0165) (Haemophilus parasuis).